The primary structure comprises 208 residues: Thiamine-phosphate synthase (208 aa).

4-amino-2-methyl-5-(diphosphooxymethyl)pyrimidine contacts are provided by residues 36 to 40 (QLRMK) and aspartate 68. Mg(2+) is bound by residues aspartate 69 and aspartate 88. Residue threonine 107 coordinates 4-amino-2-methyl-5-(diphosphooxymethyl)pyrimidine. Residue 133–135 (TTT) participates in 2-[(2R,5Z)-2-carboxy-4-methylthiazol-5(2H)-ylidene]ethyl phosphate binding. 4-amino-2-methyl-5-(diphosphooxymethyl)pyrimidine is bound at residue lysine 136. Glycine 169 provides a ligand contact to 2-[(2R,5Z)-2-carboxy-4-methylthiazol-5(2H)-ylidene]ethyl phosphate.

This sequence belongs to the thiamine-phosphate synthase family. Requires Mg(2+) as cofactor.

It carries out the reaction 2-[(2R,5Z)-2-carboxy-4-methylthiazol-5(2H)-ylidene]ethyl phosphate + 4-amino-2-methyl-5-(diphosphooxymethyl)pyrimidine + 2 H(+) = thiamine phosphate + CO2 + diphosphate. It catalyses the reaction 2-(2-carboxy-4-methylthiazol-5-yl)ethyl phosphate + 4-amino-2-methyl-5-(diphosphooxymethyl)pyrimidine + 2 H(+) = thiamine phosphate + CO2 + diphosphate. The enzyme catalyses 4-methyl-5-(2-phosphooxyethyl)-thiazole + 4-amino-2-methyl-5-(diphosphooxymethyl)pyrimidine + H(+) = thiamine phosphate + diphosphate. Its pathway is cofactor biosynthesis; thiamine diphosphate biosynthesis; thiamine phosphate from 4-amino-2-methyl-5-diphosphomethylpyrimidine and 4-methyl-5-(2-phosphoethyl)-thiazole: step 1/1. Functionally, condenses 4-methyl-5-(beta-hydroxyethyl)thiazole monophosphate (THZ-P) and 2-methyl-4-amino-5-hydroxymethyl pyrimidine pyrophosphate (HMP-PP) to form thiamine monophosphate (TMP). This Phocaeicola vulgatus (strain ATCC 8482 / DSM 1447 / JCM 5826 / CCUG 4940 / NBRC 14291 / NCTC 11154) (Bacteroides vulgatus) protein is Thiamine-phosphate synthase.